A 282-amino-acid chain; its full sequence is Phosphoglucan phosphatase LSF2, chloroplastic (282 aa).

Residues 1-61 (MSVIGSKSCI…GENPGTNGVS (61 aa)) constitute a chloroplast transit peptide. Residues Tyr83, 153-156 (RHMR), Asp161, and 177-180 (SLEW) contribute to the substrate site. A Tyrosine-protein phosphatase domain is found at 92–249 (NYTLIRDELI…TYDLAKNDPW (158 aa)). The active-site Phosphocysteine intermediate is Cys193. Positions 193–199 (CSAGLGR) match the Glucan phosphatase signature motif CXAGXGR motif. Substrate-binding positions include 194 to 199 (SAGLGR), Gly230, Lys245, Glu251, 259 to 263 (NAFED), and Glu268.

As to expression, widely expressed.

It is found in the plastid. Its subcellular location is the chloroplast. Starch-associated phosphoglucan phosphatase that selectively dephosphorylates the glucan C3 position. Probably participates in the regulation of starch degradation. This chain is Phosphoglucan phosphatase LSF2, chloroplastic (LSF2), found in Arabidopsis thaliana (Mouse-ear cress).